The sequence spans 143 residues: Transcriptional regulator MraZ (143 aa).

2 SpoVT-AbrB domains span residues 5-47 and 76-119; these read TFTP…PKAE and ADEQ…DAES.

This sequence belongs to the MraZ family. In terms of assembly, forms oligomers.

The protein localises to the cytoplasm. It is found in the nucleoid. This is Transcriptional regulator MraZ from Corynebacterium jeikeium (strain K411).